The sequence spans 538 residues: Syncytin-2 (538 aa).

The N-terminal stretch at 1-15 (MGLLLLVLILTPSLA) is a signal peptide. Residues 16–478 (AYRHPDFPLL…GWLNWEGTWK (463 aa)) lie on the Extracellular side of the membrane. The short motif at 43–46 (CWLC) is the CXXC element. Intrachain disulfides connect Cys-43/Cys-46, Cys-43/Cys-439, and Cys-431/Cys-438. Residues Asn-133, Asn-146, Asn-177, Asn-220, Asn-241, Asn-247, Asn-312, and Asn-332 are each glycosylated (N-linked (GlcNAc...) asparagine). The tract at residues 354–374 (FIPLLAGLGILAGTGTGIAGI) is fusion peptide. Positions 414-430 (LQNRRGLDMLTAAQGGI) match the CKS-17 motif. The CX6CC motif lies at 431 to 439 (CLALDEKCC). Residue Asn-443 is glycosylated (N-linked (GlcNAc...) asparagine). The helical transmembrane segment at 479 to 499 (WFSWVLPLTGPLVSLLLLLLF) threads the bilayer. Residues 500–538 (GPCLLNLITQFVSSRLQAIKLQTNLSAGRHPRNIQESPF) lie on the Cytoplasmic side of the membrane.

It belongs to the gamma type-C retroviral envelope protein family. HERV class-I FRD env subfamily. In terms of assembly, the surface and transmembrane proteins form a heterodimer. They are attached by non-covalent interactions or by a labile interchain disulfide bond. In terms of processing, specific enzymatic cleavages in vivo yield the mature SU and TM proteins. The CXXC motif is highly conserved across a broad range of retroviral envelope proteins. It is thought to participate in the formation of a labile disulfide bond possibly with the CX6CC motif present in the transmembrane protein.

The protein localises to the virion. It is found in the cell membrane. Its function is as follows. This endogenous retroviral envelope protein has retained its original fusogenic properties and participates in trophoblast fusion and the formation of a syncytium during placenta morphogenesis. The interaction with MFSD2A is apparently important for this process. Endogenous envelope proteins may have kept, lost or modified their original function during evolution but this one can still make pseudotypes with MLV, HIV-1 or SIV-1 virions and confer infectivity. Retroviral envelope proteins mediate receptor recognition and membrane fusion during early infection. The surface protein mediates receptor recognition, while the transmembrane protein anchors the envelope heterodimer to the viral membrane through one transmembrane domain. The other hydrophobic domain, called fusion peptide, mediates fusion of the viral membrane with the target cell membrane. The chain is Syncytin-2 (ERVFRD-1) from Pan troglodytes (Chimpanzee).